Reading from the N-terminus, the 238-residue chain is MSNVNMDFEQAGELKIGQVGIATLRIRTLNVPRLIQEMSDRVTRAPKLFRRTAVILDFGELPHPPDLTTAKALVDGLRAANVLPVAIAYGTNEIDLLSQQLGLPLLSKFRAHYERQEVAAPPPQSTPPINTGRIQHTTVRSGQQLYAEHCDLTILNTVGAGAEVIADGNIHIYGTLRGRAMAGARGNAEMRIFCRDFQAELIAIAGRYKVLDDIPTELRGKAVQVWLEQNQIKIAALD.

The protein belongs to the MinC family. In terms of assembly, interacts with MinD and FtsZ.

Cell division inhibitor that blocks the formation of polar Z ring septums. Rapidly oscillates between the poles of the cell to destabilize FtsZ filaments that have formed before they mature into polar Z rings. Prevents FtsZ polymerization. The sequence is that of Probable septum site-determining protein MinC from Xylella fastidiosa (strain M12).